A 354-amino-acid polypeptide reads, in one-letter code: Methylthioribose-1-phosphate isomerase (354 aa).

Substrate contacts are provided by residues 58–60 (RGA), Arg101, and Gln204. Residue Asp245 is the Proton donor of the active site. A substrate-binding site is contributed by 255–256 (NK).

The protein belongs to the eIF-2B alpha/beta/delta subunits family. MtnA subfamily.

The enzyme catalyses 5-(methylsulfanyl)-alpha-D-ribose 1-phosphate = 5-(methylsulfanyl)-D-ribulose 1-phosphate. It participates in amino-acid biosynthesis; L-methionine biosynthesis via salvage pathway; L-methionine from S-methyl-5-thio-alpha-D-ribose 1-phosphate: step 1/6. In terms of biological role, catalyzes the interconversion of methylthioribose-1-phosphate (MTR-1-P) into methylthioribulose-1-phosphate (MTRu-1-P). This chain is Methylthioribose-1-phosphate isomerase, found in Xylella fastidiosa (strain M23).